We begin with the raw amino-acid sequence, 380 residues long: Erythronate-4-phosphate dehydrogenase (380 aa).

2 residues coordinate substrate: serine 45 and threonine 66. NAD(+) contacts are provided by aspartate 146 and threonine 174. The active site involves arginine 207. Aspartate 231 contributes to the NAD(+) binding site. Glutamate 236 is a catalytic residue. The Proton donor role is filled by histidine 253. Residue glycine 256 coordinates NAD(+). Residue tyrosine 257 coordinates substrate.

Belongs to the D-isomer specific 2-hydroxyacid dehydrogenase family. PdxB subfamily. As to quaternary structure, homodimer.

It localises to the cytoplasm. The catalysed reaction is 4-phospho-D-erythronate + NAD(+) = (R)-3-hydroxy-2-oxo-4-phosphooxybutanoate + NADH + H(+). The protein operates within cofactor biosynthesis; pyridoxine 5'-phosphate biosynthesis; pyridoxine 5'-phosphate from D-erythrose 4-phosphate: step 2/5. Functionally, catalyzes the oxidation of erythronate-4-phosphate to 3-hydroxy-2-oxo-4-phosphonooxybutanoate. The protein is Erythronate-4-phosphate dehydrogenase of Pseudomonas fluorescens (strain Pf0-1).